The sequence spans 412 residues: Transforming growth factor beta-3 proprotein (412 aa).

The first 23 residues, 1-23 (MKMHLQRALVVLALLNLATVSLS), serve as a signal peptide directing secretion. N-linked (GlcNAc...) asparagine glycosylation is found at Asn-74, Asn-135, and Asn-142. The Cell attachment site motif lies at 261–263 (RGD). At Gln-293 the chain carries N5-methylglutamine. 4 cysteine pairs are disulfide-bonded: Cys-307–Cys-316, Cys-315–Cys-378, Cys-344–Cys-409, and Cys-348–Cys-411.

This sequence belongs to the TGF-beta family. Interacts with ASPN. Latency-associated peptide: Homodimer; disulfide-linked. Latency-associated peptide: Interacts with Transforming growth factor beta-3 (TGF-beta-3) chain; interaction is non-covalent and maintains (TGF-beta-3) in a latent state. Latency-associated peptide: Interacts with LRRC32/GARP; leading to regulate activation of TGF-beta-3 and promote epithelial fusion during palate development. Latency-associated peptide: Interacts (via cell attachment site) with integrins, leading to release of the active TGF-beta-3. Transforming growth factor beta-3: Homodimer; disulfide-linked. Transforming growth factor beta-3: Interacts with TGF-beta receptors (TGFBR1 and TGFBR2), leading to signal transduction. In terms of processing, transforming growth factor beta-3 proprotein: The precursor proprotein is cleaved in the Golgi apparatus to form Transforming growth factor beta-3 (TGF-beta-3) and Latency-associated peptide (LAP) chains, which remain non-covalently linked, rendering TGF-beta-3 inactive. Methylated at Gln-293 by N6AMT1. In terms of tissue distribution, expressed in cardiomyocytes.

The protein resides in the secreted. It localises to the extracellular space. Its subcellular location is the extracellular matrix. Its function is as follows. Transforming growth factor beta-3 proprotein: Precursor of the Latency-associated peptide (LAP) and Transforming growth factor beta-3 (TGF-beta-3) chains, which constitute the regulatory and active subunit of TGF-beta-3, respectively. In terms of biological role, required to maintain the Transforming growth factor beta-3 (TGF-beta-3) chain in a latent state during storage in extracellular matrix. Associates non-covalently with TGF-beta-3 and regulates its activation via interaction with 'milieu molecules', such as LTBP1 and LRRC32/GARP, that control activation of TGF-beta-3. Interaction with integrins results in distortion of the Latency-associated peptide chain and subsequent release of the active TGF-beta-3. Functionally, transforming growth factor beta-3: Multifunctional protein that regulates embryogenesis and cell differentiation and is required in various processes such as secondary palate development. Activation into mature form follows different steps: following cleavage of the proprotein in the Golgi apparatus, Latency-associated peptide (LAP) and Transforming growth factor beta-3 (TGF-beta-3) chains remain non-covalently linked rendering TGF-beta-3 inactive during storage in extracellular matrix. At the same time, LAP chain interacts with 'milieu molecules', such as LTBP1 and LRRC32/GARP that control activation of TGF-beta-3 and maintain it in a latent state during storage in extracellular milieus. TGF-beta-3 is released from LAP by integrins: integrin-binding results in distortion of the LAP chain and subsequent release of the active TGF-beta-3. Once activated following release of LAP, TGF-beta-3 acts by binding to TGF-beta receptors (TGFBR1 and TGFBR2), which transduce signal. This chain is Transforming growth factor beta-3 proprotein (Tgfb3), found in Rattus norvegicus (Rat).